The sequence spans 93 residues: uncharacterized protein (93 aa).

To E.coli YeaC.

This is an uncharacterized protein from Pseudoalteromonas haloplanktis (Alteromonas haloplanktis).